The following is a 319-amino-acid chain: MNGLLALAFAAGMLAPVNPCGFALLPAWITAALGDSDASPLPVRLTRALRSGAALTLGFAGTLAAAGLIVSAGARALIQAAPWLGLATGILLLLLGAVMLTGRTPSLRLHLTTSTRRSAGPPTARRMAAFGVGYAAASLSCTFGVLLAVIAQAQATASFAGLLAVFAAYAAGSAAVLLLVAVTTAAAGAALTRKITALARHGTRITAAVLVLTGAYLAWYWYPAATGGATTAAPGGGLATFSATATAWIQAHTTAIAVTAVVVVLAVAAAAIRHRTRQPARHSTPTGTAPSAAAADDCCAPLPVPTPASTDRDSDGHCC.

Cysteine 298, cysteine 299, cysteine 318, and cysteine 319 together coordinate Hg(2+).

The chain is Mercury resistance probable Hg transport protein from Streptomyces lividans.